The chain runs to 510 residues: ATP synthase subunit alpha (510 aa).

Residue 169-176 participates in ATP binding; it reads GDRQTGKT.

This sequence belongs to the ATPase alpha/beta chains family. As to quaternary structure, F-type ATPases have 2 components, CF(1) - the catalytic core - and CF(0) - the membrane proton channel. CF(1) has five subunits: alpha(3), beta(3), gamma(1), delta(1), epsilon(1). CF(0) has three main subunits: a(1), b(2) and c(9-12). The alpha and beta chains form an alternating ring which encloses part of the gamma chain. CF(1) is attached to CF(0) by a central stalk formed by the gamma and epsilon chains, while a peripheral stalk is formed by the delta and b chains.

The protein localises to the cell inner membrane. It carries out the reaction ATP + H2O + 4 H(+)(in) = ADP + phosphate + 5 H(+)(out). Its function is as follows. Produces ATP from ADP in the presence of a proton gradient across the membrane. The alpha chain is a regulatory subunit. This chain is ATP synthase subunit alpha, found in Nitrobacter winogradskyi (strain ATCC 25391 / DSM 10237 / CIP 104748 / NCIMB 11846 / Nb-255).